Here is a 242-residue protein sequence, read N- to C-terminus: MPGPVDATPPPELATAARTLFGDRLDLAVAYAGLLVTDGVIRGLIGPREAPRLWDRHLLNCAAATERIPLGATVVDVGSGAGLPGLVLAVARPDLSVVLVEPLARRTAFLVEAVEQLELGASVRVVRGRAEEVAVGGAGVEPLTGDVVTARAVAPLDRLARWCLPLVVPGGRMVALKGASAAGEAAEHAAVVQRLGGGAPEVHQCGVGVVEPPTTVIEIRRERVVATPRPASAKRSRGGRRG.

S-adenosyl-L-methionine-binding positions include G78, L83, 130-131 (AE), and R151.

It belongs to the methyltransferase superfamily. RNA methyltransferase RsmG family.

Its subcellular location is the cytoplasm. Functionally, specifically methylates the N7 position of guanine in position 518 of 16S rRNA. The polypeptide is Ribosomal RNA small subunit methyltransferase G (Salinispora arenicola (strain CNS-205)).